A 447-amino-acid chain; its full sequence is Oxysterols receptor LXR-alpha (447 aa).

Disordered stretches follow at residues 1–37 (MSLW…GGSS) and 65–88 (ALLT…KKGP). The tract at residues 1–96 (MSLWLGAPVP…GPAPKMLGNE (96 aa)) is transactivation AF-1; required for ligand-independent transactivation function. Residues 24–37 (GAQDASSQAQGGSS) are compositionally biased toward low complexity. Positions 95–170 (NELCSVCGDK…AGMREECVLS (76 aa)) form a DNA-binding region, nuclear receptor. 2 consecutive NR C4-type zinc fingers follow at residues 98-118 (CSVC…CEGC) and 134-158 (CHSG…LRKC). The segment at 180 to 202 (KRQEEEQAHATSLPPRASSPPQI) is disordered. The interval 205–447 (QLSPEQLGMI…LLSEIWDVHE (243 aa)) is transactivation AF-2; required for ligand-dependent transactivation function; mediates interaction with CCAR2. The region spanning 209–447 (EQLGMIEKLV…LLSEIWDVHE (239 aa)) is the NR LBD domain.

The protein belongs to the nuclear hormone receptor family. NR1 subfamily. In terms of assembly, heterodimer of NR1H3 and RXR (retinoic acid receptor). Interacts with CCAR2 (via N-terminus) in a ligand-independent manner. Interacts with SIRT1 and this interaction is inhibited by CCAR2. Interacts with GPS2. Post-translationally, ubiquitinated by UBR5, leading to its degradation: UBR5 specifically recognizes and binds ligand-bound NR1H3 when it is not associated with coactivators (NCOAs). In presence of NCOAs, the UBR5-degron is not accessible, preventing its ubiquitination and degradation. In terms of tissue distribution, visceral organs specific expression. Strong expression was found in liver, kidney and intestine followed by spleen and to a lesser extent the adrenals.

It is found in the nucleus. It localises to the cytoplasm. Nuclear receptor that exhibits a ligand-dependent transcriptional activation activity. Interaction with retinoic acid receptor (RXR) shifts RXR from its role as a silent DNA-binding partner to an active ligand-binding subunit in mediating retinoid responses through target genes defined by LXRES. LXRES are DR4-type response elements characterized by direct repeats of two similar hexanuclotide half-sites spaced by four nucleotides. Plays an important role in the regulation of cholesterol homeostasis, regulating cholesterol uptake through MYLIP-dependent ubiquitination of LDLR, VLDLR and LRP8. Interplays functionally with RORA for the regulation of genes involved in liver metabolism. Induces LPCAT3-dependent phospholipid remodeling in endoplasmic reticulum (ER) membranes of hepatocytes, driving SREBF1 processing and lipogenesis. Via LPCAT3, triggers the incorporation of arachidonate into phosphatidylcholines of ER membranes, increasing membrane dynamics and enabling triacylglycerols transfer to nascent very low-density lipoprotein (VLDL) particles. Via LPCAT3 also counteracts lipid-induced ER stress response and inflammation, likely by modulating SRC kinase membrane compartmentalization and limiting the synthesis of lipid inflammatory mediators. The polypeptide is Oxysterols receptor LXR-alpha (NR1H3) (Homo sapiens (Human)).